The chain runs to 1343 residues: DNA-directed RNA polymerase subunit beta (1343 aa).

It belongs to the RNA polymerase beta chain family. The RNAP catalytic core consists of 2 alpha, 1 beta, 1 beta' and 1 omega subunit. When a sigma factor is associated with the core the holoenzyme is formed, which can initiate transcription.

The catalysed reaction is RNA(n) + a ribonucleoside 5'-triphosphate = RNA(n+1) + diphosphate. In terms of biological role, DNA-dependent RNA polymerase catalyzes the transcription of DNA into RNA using the four ribonucleoside triphosphates as substrates. This is DNA-directed RNA polymerase subunit beta from Shewanella woodyi (strain ATCC 51908 / MS32).